The primary structure comprises 195 residues: Interferon omega-1 (195 aa).

A signal peptide spans methionine 1–serine 23. Cystine bridges form between cysteine 24–cysteine 122 and cysteine 52–cysteine 162. Residue asparagine 101 is glycosylated (N-linked (GlcNAc...) asparagine).

Belongs to the alpha/beta interferon family.

The protein resides in the secreted. The chain is Interferon omega-1 from Equus caballus (Horse).